The chain runs to 158 residues: NAD(P)H-quinone oxidoreductase subunit J, chloroplastic (158 aa).

The protein belongs to the complex I 30 kDa subunit family. NDH is composed of at least 16 different subunits, 5 of which are encoded in the nucleus.

Its subcellular location is the plastid. The protein resides in the chloroplast thylakoid membrane. It carries out the reaction a plastoquinone + NADH + (n+1) H(+)(in) = a plastoquinol + NAD(+) + n H(+)(out). The enzyme catalyses a plastoquinone + NADPH + (n+1) H(+)(in) = a plastoquinol + NADP(+) + n H(+)(out). NDH shuttles electrons from NAD(P)H:plastoquinone, via FMN and iron-sulfur (Fe-S) centers, to quinones in the photosynthetic chain and possibly in a chloroplast respiratory chain. The immediate electron acceptor for the enzyme in this species is believed to be plastoquinone. Couples the redox reaction to proton translocation, and thus conserves the redox energy in a proton gradient. The polypeptide is NAD(P)H-quinone oxidoreductase subunit J, chloroplastic (Cucumis sativus (Cucumber)).